Consider the following 759-residue polypeptide: Hormone-sensitive lipase (759 aa).

An Involved in the stabilization of the negatively charged intermediate by the formation of the oxyanion hole motif is present at residues 349–351 (HGG). The active site involves S423. The disordered stretch occupies residues 534–553 (GRKPQKTTSPTAESVRPTES). At S557 the chain carries Phosphoserine. S559 is modified (phosphoserine; by AMPK). A Phosphothreonine modification is found at T574. Residues 583–604 (LSNSEPSDSPEMSQSMETLGPS) are disordered. Residues 585–604 (NSEPSDSPEMSQSMETLGPS) are compositionally biased toward polar residues. Phosphoserine occurs at positions 597, 618, 650, and 651. Residues D694 and H724 contribute to the active site.

It belongs to the 'GDXG' lipolytic enzyme family. Monomer and homodimer. Interacts with CAVIN1 in the adipocyte cytoplasm. Interacts with PLIN5. Post-translationally, phosphorylation by AMPK reduces its translocation towards the lipid droplets.

The protein localises to the cell membrane. The protein resides in the membrane. It is found in the caveola. It localises to the cytoplasm. Its subcellular location is the cytosol. The protein localises to the lipid droplet. It carries out the reaction a diacylglycerol + H2O = a monoacylglycerol + a fatty acid + H(+). The catalysed reaction is a triacylglycerol + H2O = a diacylglycerol + a fatty acid + H(+). The enzyme catalyses a monoacylglycerol + H2O = glycerol + a fatty acid + H(+). It catalyses the reaction Hydrolyzes glycerol monoesters of long-chain fatty acids.. It carries out the reaction cholesteryl (9Z-octadecenoate) + H2O = cholesterol + (9Z)-octadecenoate + H(+). The catalysed reaction is all-trans-retinyl hexadecanoate + H2O = all-trans-retinol + hexadecanoate + H(+). The enzyme catalyses 1,2-di-(9Z-octadecenoyl)-glycerol + H2O = (9Z-octadecenoyl)-glycerol + (9Z)-octadecenoate + H(+). It catalyses the reaction 2-(5Z,8Z,11Z,14Z-eicosatetraenoyl)-glycerol + H2O = glycerol + (5Z,8Z,11Z,14Z)-eicosatetraenoate + H(+). It carries out the reaction 1-(9Z-octadecenoyl)-glycerol + H2O = glycerol + (9Z)-octadecenoate + H(+). The catalysed reaction is 2-(9Z-octadecenoyl)-glycerol + H2O = glycerol + (9Z)-octadecenoate + H(+). The enzyme catalyses 1-O-hexadecyl-2-acetyl-sn-glycerol + H2O = 1-O-hexadecyl-sn-glycerol + acetate + H(+). It catalyses the reaction 1,2-di-(9Z-octadecenoyl)-sn-glycerol + H2O = (9Z-octadecenoyl)-glycerol + (9Z)-octadecenoate + H(+). It carries out the reaction 1,3-di-(9Z-octadecenoyl)-glycerol + H2O = 1-(9Z-octadecenoyl)-glycerol + (9Z)-octadecenoate + H(+). The catalysed reaction is 1,2-di-(9Z-octadecenoyl)-glycerol + (9Z)-octadecenoate + H(+) = 1,2,3-tri-(9Z-octadecenoyl)-glycerol + H2O. The enzyme catalyses 2,3-di-(9Z)-octadecenoyl-sn-glycerol + H2O = 2-(9Z-octadecenoyl)-glycerol + (9Z)-octadecenoate + H(+). It catalyses the reaction 1,2,3-tri-(9Z-octadecenoyl)-glycerol + H2O = di-(9Z)-octadecenoylglycerol + (9Z)-octadecenoate + H(+). It carries out the reaction 1,2-di-(9Z-octadecenoyl)-glycerol + H2O = 2-(9Z-octadecenoyl)-glycerol + (9Z)-octadecenoate + H(+). Its pathway is glycerolipid metabolism; triacylglycerol degradation. Lipase with broad substrate specificity, catalyzing the hydrolysis of triacylglycerols (TAGs), diacylglycerols (DAGs), monoacylglycerols (MAGs), cholesteryl esters and retinyl esters. Shows a preferential hydrolysis of DAGs over TAGs and MAGs and of the fatty acid (FA) esters at the sn-1 and sn-2 positions of the glycerol backbone in TAGs. Preferentially hydrolyzes FA esters at the sn-3 position of the glycerol backbone in DAGs. Catalyzes the hydrolysis of 2-arachidonoylglycerol, an endocannabinoid and of 2-acetyl monoalkylglycerol ether, the penultimate precursor of the pathway for de novo synthesis of platelet-activating factor. In adipose tissue and heart, it primarily hydrolyzes stored triglycerides to free fatty acids, while in steroidogenic tissues, it principally converts cholesteryl esters to free cholesterol for steroid hormone production. This chain is Hormone-sensitive lipase (Lipe), found in Mus musculus (Mouse).